A 214-amino-acid polypeptide reads, in one-letter code: NADH-quinone oxidoreductase subunit C (214 aa).

This sequence belongs to the complex I 30 kDa subunit family. As to quaternary structure, NDH-1 is composed of 14 different subunits. Subunits NuoB, C, D, E, F, and G constitute the peripheral sector of the complex.

The protein resides in the cell inner membrane. It carries out the reaction a quinone + NADH + 5 H(+)(in) = a quinol + NAD(+) + 4 H(+)(out). NDH-1 shuttles electrons from NADH, via FMN and iron-sulfur (Fe-S) centers, to quinones in the respiratory chain. The immediate electron acceptor for the enzyme in this species is believed to be ubiquinone. Couples the redox reaction to proton translocation (for every two electrons transferred, four hydrogen ions are translocated across the cytoplasmic membrane), and thus conserves the redox energy in a proton gradient. This chain is NADH-quinone oxidoreductase subunit C, found in Francisella tularensis subsp. novicida (strain U112).